The sequence spans 431 residues: O-Mevalon transferase macI (431 aa).

N176 carries an N-linked (GlcNAc...) asparagine glycan. The next 4 helical transmembrane spans lie at 198–218, 301–321, 336–356, and 404–424; these read IYAL…AILM, LLMM…YQVT, YFAL…VLGI, and LFAA…NFVA.

Belongs to the wax synthase family.

Its subcellular location is the membrane. Its pathway is secondary metabolite biosynthesis; terpenoid biosynthesis. In terms of biological role, O-Mevalon transferase; part of the gene cluster that mediates the biosynthesis of macrophorins, isoprenoid epoxycyclohexenones containing cyclized drimane moieties. The first step of the pathway is the synthesis of 6-methylsalicylic acid (6-MSA) by the polyketide synthase macA. 6-MSA is then converted to m-cresol by the decarboxylase macB. The cytochrome P450 monooxygenase macC then catalyzes the oxidation of m-cresol to toluquinol. Epoxidation of toluquinol is then performed by the short chain dehydrogenase macD, with the help of macE, and a further prenylation by macG leads to 7-deacetoxyyanuthone A. The next step is the hydroxylation of C-22 of 7-deacetoxyyanuthone A by the cytochrome P450 monooxygenase macH to yield 22-deacetylyanuthone A. O-Mevalon transferase macI then attaches mevalon to the hydroxyl group of 22-deacetylyanuthone A to produce yanuthone E. The terpene cyclase macJ catalyzes the cyclization of 22-deacetylyanuthone A to macrophorin A. MacJ is also able to catalyze cyclization of yanuthone E and 7-deacetoxyyanuthone A to their corresponding macrophorins. The macJ products can be further modified by macH and macJ, as well as by the FAD-dependent monooxygenase macF, to produce additional macrophorins, including 4'-oxomacrophorin A, 4'-oxomacrophorin D and 4'-oxomacrophorin E. This chain is O-Mevalon transferase macI, found in Penicillium terrestre.